Reading from the N-terminus, the 418-residue chain is Glutamyl-tRNA reductase (418 aa).

Residues 49–52 (TCNR), serine 109, 114–116 (EPQ), and glutamine 120 each bind substrate. Cysteine 50 serves as the catalytic Nucleophile. 189–194 (GAGETI) contributes to the NADP(+) binding site.

It belongs to the glutamyl-tRNA reductase family. As to quaternary structure, homodimer.

It catalyses the reaction (S)-4-amino-5-oxopentanoate + tRNA(Glu) + NADP(+) = L-glutamyl-tRNA(Glu) + NADPH + H(+). It functions in the pathway porphyrin-containing compound metabolism; protoporphyrin-IX biosynthesis; 5-aminolevulinate from L-glutamyl-tRNA(Glu): step 1/2. Functionally, catalyzes the NADPH-dependent reduction of glutamyl-tRNA(Glu) to glutamate 1-semialdehyde (GSA). This chain is Glutamyl-tRNA reductase, found in Erwinia tasmaniensis (strain DSM 17950 / CFBP 7177 / CIP 109463 / NCPPB 4357 / Et1/99).